The primary structure comprises 142 residues: Large ribosomal subunit protein mL42 (142 aa).

Residues 1–31 (MAAAVKWAISNRTIWKHLLPIQNGALSSACH) constitute a mitochondrion transit peptide.

The protein belongs to the mitochondrion-specific ribosomal protein mL42 family. In terms of assembly, component of the mitochondrial ribosome large subunit (39S) which comprises a 16S rRNA and about 50 distinct proteins. Component of the mitochondrial ribosome small subunit (28S) which comprises a 12S rRNA and about 30 distinct proteins.

The protein resides in the mitochondrion. In Mus musculus (Mouse), this protein is Large ribosomal subunit protein mL42 (Mrpl42).